A 294-amino-acid chain; its full sequence is Pyridoxal 5'-phosphate synthase subunit PdxS (294 aa).

Residue aspartate 24 participates in D-ribose 5-phosphate binding. The Schiff-base intermediate with D-ribose 5-phosphate role is filled by lysine 81. Glycine 153 contributes to the D-ribose 5-phosphate binding site. A D-glyceraldehyde 3-phosphate-binding site is contributed by arginine 165. D-ribose 5-phosphate-binding positions include glycine 214 and glycine 235–serine 236.

The protein belongs to the PdxS/SNZ family. As to quaternary structure, in the presence of PdxT, forms a dodecamer of heterodimers.

It carries out the reaction aldehydo-D-ribose 5-phosphate + D-glyceraldehyde 3-phosphate + L-glutamine = pyridoxal 5'-phosphate + L-glutamate + phosphate + 3 H2O + H(+). Its pathway is cofactor biosynthesis; pyridoxal 5'-phosphate biosynthesis. In terms of biological role, catalyzes the formation of pyridoxal 5'-phosphate from ribose 5-phosphate (RBP), glyceraldehyde 3-phosphate (G3P) and ammonia. The ammonia is provided by the PdxT subunit. Can also use ribulose 5-phosphate and dihydroxyacetone phosphate as substrates, resulting from enzyme-catalyzed isomerization of RBP and G3P, respectively. The protein is Pyridoxal 5'-phosphate synthase subunit PdxS of Bacillus licheniformis (strain ATCC 14580 / DSM 13 / JCM 2505 / CCUG 7422 / NBRC 12200 / NCIMB 9375 / NCTC 10341 / NRRL NRS-1264 / Gibson 46).